The chain runs to 176 residues: DELTA-stichotoxin-She4a (176 aa).

The interval 2–11 (ELAGTIIDGA) is plays an important role in the hemolytic activity. An N-terminal region region spans residues 10–29 (GASLTFEVLDKVLGELGKVS). Positions 53, 86, 104, 106, 132, 136, and 137 each coordinate phosphocholine. The trp-rich region, which is important for the binding to lipid membrane stretch occupies residues 104–119 (SVPFDYNWYSNWWDVK). The Cell attachment site signature appears at 142–144 (RGD).

In terms of assembly, octamer or nonamer in membranes. Monomer in the soluble state.

Its subcellular location is the secreted. The protein resides in the nematocyst. It is found in the target cell membrane. Pore-forming protein that forms cations-selective hydrophilic pores of around 1 nm and causes cardiac stimulation and cytolysis. Pore formation is a multi-step process that involves specific recognition of membrane sphingomyelin (but neither cholesterol nor phosphatidylcholine) using aromatic rich region and adjacent phosphocholine (POC) binding site, firm binding to the membrane (mainly driven by hydrophobic interactions) accompanied by the transfer of the N-terminal region to the lipid-water interface and finally pore formation after oligomerization of monomers. Cytolytic effects include red blood cells hemolysis, platelet aggregation and lysis, cytotoxic and cytostatic effects on fibroblasts. Lethality in mammals has been ascribed to severe vasospasm of coronary vessels, cardiac arrhythmia, and inotropic effects. This Stichodactyla helianthus (Sun anemone) protein is DELTA-stichotoxin-She4a.